Reading from the N-terminus, the 1102-residue chain is Phosphatidylinositol 4,5-bisphosphate 3-kinase catalytic subunit gamma isoform (1102 aa).

Residues 34 to 141 (SMELIPIEFV…PGQIHVVQRH (108 aa)) form the PI3K-ABD domain. A PI3K-RBD domain is found at 217-309 (NNCVFIVIHR…GEEIHLVLDT (93 aa)). The C2 PI3K-type domain occupies 357 to 521 (CDRKFRVKIR…NSMSISILLD (165 aa)). Residues 541 to 723 (DRVRAEMPNQ…AVILEAYLRG (183 aa)) form the PIK helical domain. The PI3K/PI4K catalytic domain maps to 797–1080 (VIEKCKVMAS…QIEVCRDKGW (284 aa)). The interval 803–809 (VMASKKK) is G-loop. ATP-binding positions include 829–838 (GIIFKHGDDL) and 864–872 (LLPYGCIST). The tract at residues 943–951 (GIGDRHNDN) is catalytic loop. An ATP-binding site is contributed by 961-969 (FHIDFGHIL). Residues 962 to 988 (HIDFGHILGNYKSFLGINKERVPFVLT) form an activation loop region. At threonine 1024 the chain carries Phosphothreonine; by PKA. Position 1101 is a phosphoserine; by autocatalysis (serine 1101).

The protein belongs to the PI3/PI4-kinase family. As to quaternary structure, heterodimer of a catalytic subunit PIK3CG and a PIK3R5 or PIK3R6 regulatory subunit. Interacts with GRK2 through the PIK helical domain. Interaction with GRK2 is required for targeting to agonist-occupied receptor. Interacts with PDE3B; regulates PDE3B activity and thereby cAMP levels in cells. Interacts with TPM2. Interacts with EPHA8; regulates integrin-mediated cell adhesion to substrate. Interacts with HRAS; the interaction is required for membrane recruitment and beta-gamma G protein dimer-dependent activation of the PI3K gamma complex PIK3CG:PIK3R6. Post-translationally, autophosphorylation at Ser-1101 has no effect on the phosphatidylinositol-4,5-bisphosphate 3-kinase activity.

The protein localises to the cytoplasm. The protein resides in the cell membrane. It catalyses the reaction a 1,2-diacyl-sn-glycero-3-phospho-(1D-myo-inositol-4,5-bisphosphate) + ATP = a 1,2-diacyl-sn-glycero-3-phospho-(1D-myo-inositol-3,4,5-trisphosphate) + ADP + H(+). The catalysed reaction is a 1,2-diacyl-sn-glycero-3-phospho-(1D-myo-inositol) + ATP = a 1,2-diacyl-sn-glycero-3-phospho-(1D-myo-inositol-3-phosphate) + ADP + H(+). It carries out the reaction a 1,2-diacyl-sn-glycero-3-phospho-(1D-myo-inositol 4-phosphate) + ATP = a 1,2-diacyl-sn-glycero-3-phospho-(1D-myo-inositol-3,4-bisphosphate) + ADP + H(+). The enzyme catalyses L-seryl-[protein] + ATP = O-phospho-L-seryl-[protein] + ADP + H(+). Its pathway is phospholipid metabolism; phosphatidylinositol phosphate biosynthesis. Its activity is regulated as follows. Activated by both the alpha and the beta-gamma G proteins following stimulation of G protein-coupled receptors (GPCRs). Activation by GPCRs is assisted by the regulatory subunits (PIK3R5 or PIK3R6) leading to the translocation from the cytosol to the plasma membrane and to kinase activation. When bound to PIK3R5 the PI3K activity of PIK3CG could be activated greater than 100-fold by the beta-gamma G proteins. Functionally, phosphoinositide-3-kinase (PI3K) that phosphorylates PtdIns(4,5)P2 (Phosphatidylinositol 4,5-bisphosphate) to generate phosphatidylinositol 3,4,5-trisphosphate (PIP3). PIP3 plays a key role by recruiting PH domain-containing proteins to the membrane, including AKT1 and PDPK1, activating signaling cascades involved in cell growth, survival, proliferation, motility and morphology. Links G-protein coupled receptor activation to PIP3 production. Involved in immune, inflammatory and allergic responses. Modulates leukocyte chemotaxis to inflammatory sites and in response to chemoattractant agents. May control leukocyte polarization and migration by regulating the spatial accumulation of PIP3 and by regulating the organization of F-actin formation and integrin-based adhesion at the leading edge. Controls motility of dendritic cells. Participates in T-lymphocyte migration. Regulates T-lymphocyte proliferation and cytokine production. Required for B-lymphocyte development and signaling. Together with other PI3Ks are involved in the oxidative burst produced by neutrophils in response to chemotactic agents. Together with PIK3CD regulate neutrophil extravasation. Together with PIK3CB promotes platelet aggregation and thrombosis. Regulates alpha-IIb/beta-3 integrins (ITGA2B/ ITGB3) adhesive function in platelets downstream of P2Y12 through a lipid kinase activity-independent mechanism. May have also a lipid kinase activity-dependent function in platelet aggregation. Involved in endothelial progenitor cell migration. Negative regulator of cardiac contractility. Modulates cardiac contractility by anchoring protein kinase A (PKA) and PDE3B activation, reducing cAMP levels. Regulates cardiac contractility also by promoting beta-adrenergic receptor internalization by binding to GRK2 and by non-muscle tropomyosin phosphorylation. Also has serine/threonine protein kinase activity: both lipid and protein kinase activities are required for beta-adrenergic receptor endocytosis. May also have a scaffolding role in modulating cardiac contractility. Contribute to cardiac hypertrophy under pathological stress. Through simultaneous binding of PDE3B to RAPGEF3 and PIK3R6 is assembled in a signaling complex in which the PI3K gamma complex is activated by RAPGEF3 and which is involved in angiogenesis. In neutrophils, participates in a phospholipase C-activating N-formyl peptide-activated GPCR (G protein-coupled receptor) signaling pathway downstream of RASGRP4-mediated Ras-activation, to promote neutrophil functional responses. In Sus scrofa (Pig), this protein is Phosphatidylinositol 4,5-bisphosphate 3-kinase catalytic subunit gamma isoform (PIK3CG).